A 134-amino-acid chain; its full sequence is Small ribosomal subunit protein uS8 (134 aa).

It belongs to the universal ribosomal protein uS8 family. Part of the 30S ribosomal subunit. Contacts proteins S5 and S12.

Functionally, one of the primary rRNA binding proteins, it binds directly to 16S rRNA central domain where it helps coordinate assembly of the platform of the 30S subunit. This is Small ribosomal subunit protein uS8 from Pseudothermotoga lettingae (strain ATCC BAA-301 / DSM 14385 / NBRC 107922 / TMO) (Thermotoga lettingae).